A 136-amino-acid chain; its full sequence is NADH-ubiquinone oxidoreductase chain 3 (136 aa).

A run of 3 helical transmembrane segments spans residues Thr5 to Phe25, Ile55 to Tyr75, and Gly85 to Phe105.

The protein belongs to the complex I subunit 3 family.

It localises to the mitochondrion membrane. It carries out the reaction a ubiquinone + NADH + 5 H(+)(in) = a ubiquinol + NAD(+) + 4 H(+)(out). Functionally, core subunit of the mitochondrial membrane respiratory chain NADH dehydrogenase (Complex I) that is believed to belong to the minimal assembly required for catalysis. Complex I functions in the transfer of electrons from NADH to the respiratory chain. The immediate electron acceptor for the enzyme is believed to be ubiquinone. This Emericella nidulans (Aspergillus nidulans) protein is NADH-ubiquinone oxidoreductase chain 3 (nd3).